We begin with the raw amino-acid sequence, 103 residues long: Small ribosomal subunit protein uS10 (103 aa).

It belongs to the universal ribosomal protein uS10 family. In terms of assembly, part of the 30S ribosomal subunit.

Functionally, involved in the binding of tRNA to the ribosomes. In Cellvibrio japonicus (strain Ueda107) (Pseudomonas fluorescens subsp. cellulosa), this protein is Small ribosomal subunit protein uS10.